Here is a 428-residue protein sequence, read N- to C-terminus: UPF0229 protein YeaH (428 aa).

Residues 78 to 90 (GNDHFIQNDRIER) show a composition bias toward basic and acidic residues. A disordered region spans residues 78–111 (GNDHFIQNDRIERPQGGGGGGSGSGQGQASQDGE). The span at 92–103 (QGGGGGGSGSGQ) shows a compositional bias: gly residues.

This sequence belongs to the UPF0229 family.

The protein is UPF0229 protein YeaH of Salmonella heidelberg (strain SL476).